Here is a 1079-residue protein sequence, read N- to C-terminus: Psi-producing oxygenase A (1079 aa).

The segment at Thr-105–Val-446 is linoleate 8R-lipoxygenase. His-202 is a binding site for heme b. The active site involves Tyr-374. His-377 provides a ligand contact to heme b. The tract at residues Gln-654 to Glu-1079 is 9,12-octadecadienoate 8-hydroperoxide 8R-isomerase.

The protein belongs to the peroxidase family. Homotetramer. Requires heme b as cofactor.

The catalysed reaction is (9Z,12Z)-octadecadienoate + O2 = (8R,9Z,12Z)-8-hydroperoxyoctadeca-9,12-dienoate. The enzyme catalyses (8R,9Z,12Z)-8-hydroperoxyoctadeca-9,12-dienoate = (5S,8R,9Z,12Z)-5,8-dihydroxyoctadeca-9,12-dienoate. In terms of biological role, bifunctional heme-containing enzyme that oxidizes linoleic acid to (8R,9Z,12Z)-8-hydroperoxyoctadeca-9,12-dienoate (within the N-terminal heme peroxidase domain), which is subsequently isomerized to (5S,8R,9Z,12Z)-5,8-dihydroxyoctadeca-9,12-dienoate (within the C-terminal P450 heme thiolate domain). Oxidized unsaturated fatty acids, so-called oxylipins, derived from endogenous fatty acids, influence the development of the asexual conidiophores and sexual cleistothecia and regulate the secondary metabolism. These substances were collectively named psi factors and are primarily a mixture of hydroxylated oleic, linoleic and alpha-linolenic acids. They are termed psi-beta, psi-alpha, and psi-gamma, respectively. Oxylipins may also serve as activators of mammalian immune responses contributing to enhanced resistance to opportunistic fungi and as factors that modulate fungal development contributing to resistance to host defenses. In Aspergillus fumigatus (strain ATCC MYA-4609 / CBS 101355 / FGSC A1100 / Af293) (Neosartorya fumigata), this protein is Psi-producing oxygenase A (ppoA).